Consider the following 733-residue polypeptide: Cyclic nucleotide-gated channel (733 aa).

Disordered regions lie at residues 1 to 33 and 67 to 95; these read MSTA…PTAS and PNGN…IEVP. The Cytoplasmic portion of the chain corresponds to 1–125; sequence MSTAEPAPDP…PSTDNFYYWT (125 aa). Polar residues predominate over residues 12-25; it reads NPSTSGLAPTTNGI. Residues 126-148 form a helical membrane-spanning segment; it reads CVVTVAYIYNLLFVIARQVFNDL. Topologically, residues 149-197 are extracellular; it reads IGPSSQSLCRFYNGTLNSTTQVECTYNMLTNMKEMPTYSQYPDLGWSKY. Residues 198–217 traverse the membrane as a helical segment; that stretch reads WHFRMLWVFFDLLMDCVYLI. The Cytoplasmic segment spans residues 218-251; it reads DTFLNYRMGYMDQGLVVREAEKVTKAYWQSKQYR. A helical transmembrane segment spans residues 252-265; it reads IDGISLIPLDYILG. At 266–276 the chain is on the extracellular side; that stretch reads WPIPYINWRGL. Residues 277–287 traverse the membrane as a helical segment; sequence PILRLNRLIRY. The Cytoplasmic segment spans residues 288-308; that stretch reads KRVRNCLERTETRSSMPNAFR. Residues 309–331 traverse the membrane as a helical segment; the sequence is VVVVVWYIVIIIHWNACLYFWIS. Over 332–362 the chain is Extracellular; the sequence is EWIGLGTDAWVYGHLNKQSLPDDITDTLLRR. The next 2 helical transmembrane spans lie at 363–385 and 386–411; these read YVYS…SPVR and NIEY…GNVG. The interval 376 to 379 is selectivity filter; sequence TIGE. Residue Glu-379 coordinates Na(+). The Cytoplasmic portion of the chain corresponds to 412 to 733; the sequence is SMISNMSAAR…TGTESESLLK (322 aa). Positions 419–496 are C-linker; that stretch reads AARTEFQNKM…TLRKVRIFQD (78 aa). The cyclic nucleotide-binding domain stretch occupies residues 493 to 607; sequence IFQDCEAGLL…ALREYPDARK (115 aa). Position 559 (Gly-559) interacts with 3',5'-cyclic GMP. Glu-560 provides a ligand contact to 3',5'-cyclic AMP. The 3',5'-cyclic GMP site is built by Ser-562, Arg-575, Thr-576, Lys-619, and Asp-620. Arg-575 is a 3',5'-cyclic AMP binding site. Positions 694-733 are disordered; it reads SIDGGDISTDGVDERVRPPRLRQTKTIDLPTGTESESLLK.

The protein belongs to the cyclic nucleotide-gated cation channel (TC 1.A.1.5) family. As to quaternary structure, homotetramer. As to expression, expressed at the sensory endings of thermosensory, gustatory, and olfactory neurons.

The protein localises to the cell membrane. It localises to the cell projection. It is found in the cilium. It carries out the reaction Ca(2+)(in) = Ca(2+)(out). The catalysed reaction is Na(+)(in) = Na(+)(out). It catalyses the reaction K(+)(in) = K(+)(out). Functionally, pore-forming subunit of the cyclic nucleotide-gated channel. Required for normal thermosensation and chemosensation sensory behavior. Required, downstream of receptor-type guanylate cyclase gcy-9, for CO2-mediated responses in BAG neurons. Required, downstream of receptor-type guanylate cyclase gcy-14, for alkaline pH-mediated responses in ASE-left (ASEL) neurons. Involved in the development of ASJ sensory neuron axon during late larval stages and in the maintenance of normal axon morphology in the adult. Regulates dauer formation. Required for the calcium flux to the cytoplasm in the ASJ sensory neurons upon the onset and removal of a nitric oxide (NO) stimulus, thereby promoting the ASJ-mediated behavioral avoidance response to NO-producing organisms like P.aeruginosa. In ASI and ASJ sensory neurons, controls behavioral response to P.aeruginosa by up-regulating the transcription of daf-7, a member of the TGF-beta family. In AWB and AWC sensory neurons, mediates the recognition of food odors which subsequently allows for the detection of preferred food sources. In AWC neurons, acts to promote expression of srsx-3, a member of the GPCR family. Binding to cGMP results in conformational changes at the hydrophobic gate that converts the protein from an inactive closed state to an active open state. The polypeptide is Cyclic nucleotide-gated channel (tax-4) (Caenorhabditis elegans).